A 32-amino-acid polypeptide reads, in one-letter code: Turripeptide XIV-18 (32 aa).

Isoleucine amide is present on I30.

In terms of processing, contains 2 disulfide bonds. As to expression, expressed by the venom duct.

It is found in the secreted. This is Turripeptide XIV-18 from Gemmula speciosa (Splendid gem-turris).